A 509-amino-acid chain; its full sequence is Acetyl-coenzyme A carboxylase carboxyl transferase subunit beta, chloroplastic (509 aa).

The disordered stretch occupies residues 164 to 216 (HGSVCDGESHNSSEGESSSRRTHTKGVDLTIRESSNENERESSNENERKSSND). Basic and acidic residues-rich tracts occupy residues 170–182 (GESHNSSEGESSS) and 193–216 (TIRESSNENERESSNENERKSSND). Residues 226-509 (LWLQCENCYG…LNQNSNQVEC (284 aa)) enclose the CoA carboxyltransferase N-terminal domain. The Zn(2+) site is built by cysteine 230, cysteine 233, cysteine 249, and cysteine 252. The C4-type zinc finger occupies 230 to 252 (CENCYGLNYKKFLKSKMNICEQC). Positions 288-307 (FDSEGEQEQEQEQEQEEEET) are disordered.

Belongs to the AccD/PCCB family. In terms of assembly, acetyl-CoA carboxylase is a heterohexamer composed of biotin carboxyl carrier protein, biotin carboxylase and 2 subunits each of ACCase subunit alpha and ACCase plastid-coded subunit beta (accD). The cofactor is Zn(2+).

It localises to the plastid. The protein resides in the chloroplast stroma. The catalysed reaction is N(6)-carboxybiotinyl-L-lysyl-[protein] + acetyl-CoA = N(6)-biotinyl-L-lysyl-[protein] + malonyl-CoA. The protein operates within lipid metabolism; malonyl-CoA biosynthesis; malonyl-CoA from acetyl-CoA: step 1/1. In terms of biological role, component of the acetyl coenzyme A carboxylase (ACC) complex. Biotin carboxylase (BC) catalyzes the carboxylation of biotin on its carrier protein (BCCP) and then the CO(2) group is transferred by the transcarboxylase to acetyl-CoA to form malonyl-CoA. In Ipomoea purpurea (Common morning glory), this protein is Acetyl-coenzyme A carboxylase carboxyl transferase subunit beta, chloroplastic.